A 144-amino-acid polypeptide reads, in one-letter code: Universal stress protein F (144 aa).

This sequence belongs to the universal stress protein A family. In terms of assembly, homodimer.

This chain is Universal stress protein F (uspF), found in Escherichia coli O157:H7.